The chain runs to 503 residues: Cytochrome c-552 (503 aa).

Positions 1–16 are cleaved as a signal peptide; it reads MKKNTIILVGALIAIA. His102 provides a ligand contact to heme c. Residues Cys130, Cys133, and Lys134 each coordinate heme. Cys168, Cys171, His172, Cys210, Cys213, and His214 together coordinate heme c. Ca(2+)-binding residues include Glu216, Tyr217, Lys273, and Gln275. Tyr217 provides a ligand contact to substrate. Residue His276 coordinates substrate. Residues His287, Cys294, Cys297, His298, His312, Cys325, Cys328, His329, and His404 each coordinate heme c.

Belongs to the cytochrome c-552 family. Ca(2+) is required as a cofactor. Requires heme c as cofactor.

Its subcellular location is the periplasm. It catalyses the reaction 6 Fe(III)-[cytochrome c] + NH4(+) + 2 H2O = 6 Fe(II)-[cytochrome c] + nitrite + 8 H(+). Its pathway is nitrogen metabolism; nitrate reduction (assimilation). Functionally, catalyzes the reduction of nitrite to ammonia, consuming six electrons in the process. This Maridesulfovibrio salexigens (strain ATCC 14822 / DSM 2638 / NCIMB 8403 / VKM B-1763) (Desulfovibrio salexigens) protein is Cytochrome c-552.